A 705-amino-acid chain; its full sequence is Effector protein AvrPphDPsv (705 aa).

Polar residues predominate over residues 1–15 (MNPLQSIQHNITTPP). Disordered stretches follow at residues 1–40 (MNPLQSIQHNITTPPISGGQPLDAVGPQAQKSHPKRISPS) and 175–205 (RLETSLLSSPDHSRPPSQPKPVHLGSVRRES).

It localises to the secreted. In terms of biological role, effector protein involved in non-host recognition. The polypeptide is Effector protein AvrPphDPsv (avrPphDPsv) (Pseudomonas savastanoi (Pseudomonas syringae pv. savastanoi)).